The primary structure comprises 212 residues: Deoxyribose-phosphate aldolase (212 aa).

The Proton donor/acceptor role is filled by D89. The active-site Schiff-base intermediate with acetaldehyde is K151. K180 functions as the Proton donor/acceptor in the catalytic mechanism.

Belongs to the DeoC/FbaB aldolase family. DeoC type 1 subfamily.

The protein resides in the cytoplasm. The enzyme catalyses 2-deoxy-D-ribose 5-phosphate = D-glyceraldehyde 3-phosphate + acetaldehyde. Its pathway is carbohydrate degradation; 2-deoxy-D-ribose 1-phosphate degradation; D-glyceraldehyde 3-phosphate and acetaldehyde from 2-deoxy-alpha-D-ribose 1-phosphate: step 2/2. In terms of biological role, catalyzes a reversible aldol reaction between acetaldehyde and D-glyceraldehyde 3-phosphate to generate 2-deoxy-D-ribose 5-phosphate. This Clostridium botulinum (strain 657 / Type Ba4) protein is Deoxyribose-phosphate aldolase.